The following is a 480-amino-acid chain: UDP-N-acetylmuramoylalanine--D-glutamate ligase (480 aa).

127–133 serves as a coordination point for ATP; sequence GTNGKTT.

It belongs to the MurCDEF family.

It is found in the cytoplasm. The enzyme catalyses UDP-N-acetyl-alpha-D-muramoyl-L-alanine + D-glutamate + ATP = UDP-N-acetyl-alpha-D-muramoyl-L-alanyl-D-glutamate + ADP + phosphate + H(+). It functions in the pathway cell wall biogenesis; peptidoglycan biosynthesis. Its function is as follows. Cell wall formation. Catalyzes the addition of glutamate to the nucleotide precursor UDP-N-acetylmuramoyl-L-alanine (UMA). This chain is UDP-N-acetylmuramoylalanine--D-glutamate ligase, found in Tropheryma whipplei (strain Twist) (Whipple's bacillus).